The following is a 542-amino-acid chain: Chaperonin GroEL (542 aa).

Residues 29-32 (TLGP), 86-90 (DGTTT), G413, 476-478 (NAA), and D492 contribute to the ATP site.

Belongs to the chaperonin (HSP60) family. As to quaternary structure, forms a cylinder of 14 subunits composed of two heptameric rings stacked back-to-back. Interacts with the co-chaperonin GroES.

Its subcellular location is the cytoplasm. It catalyses the reaction ATP + H2O + a folded polypeptide = ADP + phosphate + an unfolded polypeptide.. In terms of biological role, together with its co-chaperonin GroES, plays an essential role in assisting protein folding. The GroEL-GroES system forms a nano-cage that allows encapsulation of the non-native substrate proteins and provides a physical environment optimized to promote and accelerate protein folding. This is Chaperonin GroEL from Lactococcus lactis subsp. lactis (strain IL1403) (Streptococcus lactis).